We begin with the raw amino-acid sequence, 223 residues long: PRA1 family protein B5 (223 aa).

Transmembrane regions (helical) follow at residues 83 to 103 (SSYF…FSLL), 105 to 125 (HPFS…LYLF), 146 to 166 (GGLI…SVLI), 170 to 190 (MIGI…DLFL), and 196 to 216 (AASG…APSA).

Belongs to the PRA1 family. As to quaternary structure, interacts with PRA1B1, PRA1B2, PRA1B3, PRA1B4, PRA1B6 and PRA1E. Expressed in roots, lateral roots, lateral root caps, columella cells, leaves, and shoot apex.

Its subcellular location is the endosome membrane. In terms of biological role, may be involved in both secretory and endocytic intracellular trafficking in the endosomal/prevacuolar compartments. This Arabidopsis thaliana (Mouse-ear cress) protein is PRA1 family protein B5 (PRA1B5).